A 103-amino-acid polypeptide reads, in one-letter code: Histone H4 (103 aa).

Gly residues predominate over residues 1 to 14 (MSGRGKGGKGLGKG). The segment at 1-20 (MSGRGKGGKGLGKGGAKRHR) is disordered. An N-acetylserine modification is found at Ser-2. The residue at position 17 (Lys-17) is an N6-acetyllysine. Residues 17 to 21 (KRHRK) mediate DNA binding. Lys-21 carries the post-translational modification N6-methyllysine.

This sequence belongs to the histone H4 family. In terms of assembly, the nucleosome is a histone octamer containing two molecules each of H2A, H2B, H3 and H4 assembled in one H3-H4 heterotetramer and two H2A-H2B heterodimers. The octamer wraps approximately 147 bp of DNA.

The protein localises to the nucleus. Its subcellular location is the chromosome. Its function is as follows. Core component of nucleosome. Nucleosomes wrap and compact DNA into chromatin, limiting DNA accessibility to the cellular machineries which require DNA as a template. Histones thereby play a central role in transcription regulation, DNA repair, DNA replication and chromosomal stability. DNA accessibility is regulated via a complex set of post-translational modifications of histones, also called histone code, and nucleosome remodeling. In Capsicum annuum (Capsicum pepper), this protein is Histone H4.